Reading from the N-terminus, the 96-residue chain is UPF0298 protein LCA_1075 (96 aa).

This sequence belongs to the UPF0298 family.

It localises to the cytoplasm. This Latilactobacillus sakei subsp. sakei (strain 23K) (Lactobacillus sakei subsp. sakei) protein is UPF0298 protein LCA_1075.